Here is a 458-residue protein sequence, read N- to C-terminus: UDP-N-acetylmuramoylalanine--D-glutamate ligase (458 aa).

124–130 is an ATP binding site; it reads GSDGKTT.

Belongs to the MurCDEF family.

The protein localises to the cytoplasm. The catalysed reaction is UDP-N-acetyl-alpha-D-muramoyl-L-alanine + D-glutamate + ATP = UDP-N-acetyl-alpha-D-muramoyl-L-alanyl-D-glutamate + ADP + phosphate + H(+). It participates in cell wall biogenesis; peptidoglycan biosynthesis. Cell wall formation. Catalyzes the addition of glutamate to the nucleotide precursor UDP-N-acetylmuramoyl-L-alanine (UMA). The polypeptide is UDP-N-acetylmuramoylalanine--D-glutamate ligase (Clostridium botulinum (strain Loch Maree / Type A3)).